The chain runs to 909 residues: Zinc finger and BTB domain-containing protein 41 (909 aa).

Positions 88-152 constitute a BTB domain; the sequence is CDLLIIVEGK…LYTSEFFVYK (65 aa). A C2H2-type 1 zinc finger spans residues 207 to 230; the sequence is HQCKFCSRHFCYKKSLENHLAKTH. The disordered stretch occupies residues 252–344; sequence RSKRNRKCPV…PEAGDSVGNV (93 aa). Positions 266-275 are enriched in acidic residues; the sequence is TSDDEQESGD. A compositionally biased stretch (basic and acidic residues) spans 284-295; sequence NFDKEKSDRNDS. A compositionally biased stretch (acidic residues) spans 296–322; that stretch reads EDPGSEYNAEEDELEEEMSDEYSDIEE. 13 C2H2-type zinc fingers span residues 361-383, 389-411, 422-445, 463-485, 491-514, 518-541, 547-569, 575-597, 603-625, 631-654, 668-690, 696-718, and 724-747; these read LQCP…TRVH, FECD…RKKH, HKCP…KRFH, WKCD…MILH, FKCT…EKFH, FPCD…ECTH, WTCF…LRIH, HLCS…LRVH, YECD…KKIH, HQCE…KSVH, HQCD…FRTH, YKCQ…LVIH, and FNCQ…DHVH.

It localises to the nucleus. Its function is as follows. May be involved in transcriptional regulation. In Homo sapiens (Human), this protein is Zinc finger and BTB domain-containing protein 41 (ZBTB41).